Consider the following 1221-residue polypeptide: Phosphoenolpyruvate carboxylase 2 (1221 aa).

Residue H156 is part of the active site. 2 disordered regions span residues 443-588 (TAAE…DPTF) and 642-661 (REPAGEAHGGVGAGGGGGGG). Low complexity-rich tracts occupy residues 503-513 (TTTATAAAAAA) and 550-564 (PFREAANAAMSTAAS). 2 stretches are compositionally biased toward gly residues: residues 565–575 (GGAGGGGGGGA) and 648–661 (AHGGVGAGGGGGGG). K886 is a catalytic residue.

It belongs to the PEPCase type 1 family. Mg(2+) is required as a cofactor.

The protein localises to the cytoplasm. The catalysed reaction is oxaloacetate + phosphate = phosphoenolpyruvate + hydrogencarbonate. Through the carboxylation of phosphoenolpyruvate (PEP) it forms oxaloacetate, a four-carbon dicarboxylic acid source for the tricarboxylic acid cycle. This chain is Phosphoenolpyruvate carboxylase 2, found in Chlamydomonas reinhardtii (Chlamydomonas smithii).